The primary structure comprises 946 residues: Protein translocase subunit SecA (946 aa).

Residues Gln87, 105 to 109 (GEGKT), and Asp524 contribute to the ATP site. Disordered regions lie at residues 872-892 (PEQP…NTGE) and 904-946 (PADT…GRYA). Positions 907–917 (TVEKSERDPNR) are enriched in basic and acidic residues. Zn(2+)-binding residues include Cys930, Cys932, Cys941, and His942. The segment covering 936 to 946 (KKYKHCHGRYA) has biased composition (basic residues).

It belongs to the SecA family. As to quaternary structure, monomer and homodimer. Part of the essential Sec protein translocation apparatus which comprises SecA, SecYEG and auxiliary proteins SecDF-YajC and YidC. Zn(2+) is required as a cofactor.

It localises to the cell inner membrane. The protein localises to the cytoplasm. The enzyme catalyses ATP + H2O + cellular proteinSide 1 = ADP + phosphate + cellular proteinSide 2.. Functionally, part of the Sec protein translocase complex. Interacts with the SecYEG preprotein conducting channel. Has a central role in coupling the hydrolysis of ATP to the transfer of proteins into and across the cell membrane, serving both as a receptor for the preprotein-SecB complex and as an ATP-driven molecular motor driving the stepwise translocation of polypeptide chains across the membrane. This is Protein translocase subunit SecA from Rhodopseudomonas palustris (strain BisB5).